Reading from the N-terminus, the 455-residue chain is MLEYTAGLIRRNKKKFLISSGIIGVGYYVTKTINNKIQEFQNRIREENFAKEQIKRRFHQTQSDCYMTFLSLLPVLCEPIMDDLPVETITKQLQIRRLEKQIGNKDVKNSGSTVLSDDFSTSQEGAISEDTNKPPELKSKNQLWQELKIKAITRFLTLIYCESLLIVFLHLQLNILSRKSYLETAIRLASETQGIDLVDQESNGDFSGNTQDENLSEQAFLSFSWWLLNKGWLEIKNKIEPCVEQHFGGINPRQQLKINEFAELLNKCQNCIDLKVLNLTEDDIHLGVGVIEDQSQPVGRKSTNFITNALLPPKEFEFFLLQQTNDLDFLSRFNNNIVNTESLNMLLDELNNYLNNADINLIVNKLATLGITKVLDEIVLNLLQKNRPNPISDMNIRDIDLNDFPPYKLAALLANITKQSISLTNNSVENPILADLNNLPELNDLSASVYSNFDP.

Positions 113–125 (TVLSDDFSTSQEG) are enriched in polar residues. Residues 113–135 (TVLSDDFSTSQEGAISEDTNKPP) are disordered. Residues 155–171 (FLTLIYCESLLIVFLHL) form a helical membrane-spanning segment.

It belongs to the peroxin-3 family. In terms of assembly, component of the peroxisomal docking complex, composed of at least PEX3, PEX13, PEX14 and PEX17. Component of the peroxisomal translocation complex, composed of at least PEX3, PEX2, PEX10 and PEX12. Interacts with PEX19. Interacts with the pexophagy receptor ATG30.

The protein resides in the peroxisome membrane. Functionally, peroxisomal membrane protein required for peroxisome biosynthesis. Shared component of both the peroxisomal docking complex and the peroxisomal translocation complex. The two types of peroxisomal matrix targeting signals, PTS1 and PTS2, are first recognized in the cytosol by their receptors PEX5 and PEX7, respectively, which then carry the cargo to the peroxisomal membrane. The peroxisomal targeting signal (PTS) receptor-cargo complexes interact with peroxisomal membrane protein (PMP) components of the docking complex. They have then additional downstream interactions with the translocation complex, leading to the transport of fully folded and oligomerized cargo into the peroxisome matrix. PEX3 acts as an anchoring site for PEX19 on the peroxisomal membrane and thus plays a crucial role in the assembly of the peroxisomal translocation complex. Is also essential for the interaction between the two complexes. Finally. PEX3 activates selective autophagy of peroxisomes (pexophagy) via interaction with the pexophagy receptor ATG30. This Komagataella phaffii (strain GS115 / ATCC 20864) (Yeast) protein is Peroxisomal membrane protein PEX3.